The sequence spans 234 residues: Adenosine 5'-phosphosulfate reductase (234 aa).

[4Fe-4S] cluster contacts are provided by C120, C121, C203, and C206. Catalysis depends on C229, which acts as the Nucleophile; cysteine thiosulfonate intermediate.

The protein belongs to the PAPS reductase family. CysH subfamily. [4Fe-4S] cluster serves as cofactor.

The protein resides in the cytoplasm. It catalyses the reaction [thioredoxin]-disulfide + sulfite + AMP + 2 H(+) = adenosine 5'-phosphosulfate + [thioredoxin]-dithiol. It functions in the pathway sulfur metabolism; hydrogen sulfide biosynthesis; sulfite from sulfate. Its function is as follows. Catalyzes the formation of sulfite from adenosine 5'-phosphosulfate (APS) using thioredoxin as an electron donor. This chain is Adenosine 5'-phosphosulfate reductase, found in Bacillus cereus (strain Q1).